A 473-amino-acid chain; its full sequence is Cephalotoxin-like protein (473 aa).

Residues 1–21 (RWLGWQKFCWISCLFSSISSG) form the signal peptide. 2 coiled-coil regions span residues 40 to 60 (AINAINEEYIAQAKAIEEALK) and 116 to 147 (LINERFNEVNAKLDRIDEKLDEMEKSIKADTA).

In terms of tissue distribution, component of the acid-insoluble and acid-soluble organic matrix of the aragonitic skeleton (at protein level).

It is found in the secreted. The sequence is that of Cephalotoxin-like protein from Acropora millepora (Staghorn coral).